Consider the following 185-residue polypeptide: Prenylated Rab acceptor protein 1 (185 aa).

Residues 1 to 78 (MAAQKDQQKD…RNVEYYQSNY (78 aa)) lie on the Cytoplasmic side of the membrane. Residues 30–54 (AGREWLERRRATIRPWGTFVDQQRF) form a required for interaction with prenylated RAB3A and VAMP2 region. A run of 2 helical transmembrane segments spans residues 79 to 94 (VFVFLGLILYCVVTSP) and 95 to 112 (MLLVALAVFFGACYILYL). The Cytoplasmic portion of the chain corresponds to 113 to 131 (RTLQSKLVLFGREVSPAHQ). 2 helical membrane-spanning segments follow: residues 132-148 (YALAGGVSFPFFWLAGA) and 149-165 (GSAVFWVLGATLVLIGS). Residues 165–185 (SHAAFHQMEPADGEELQMEPV) form a required for interaction with GDI1 region. Residues 166–185 (HAAFHQMEPADGEELQMEPV) lie on the Cytoplasmic side of the membrane. Residues 175–185 (ADGEELQMEPV) are required for interaction with prenylated RAB3A and VAMP2. The homodimerization stretch occupies residues 175–185 (ADGEELQMEPV).

Belongs to the PRA1 family. Homodimer. Interacts with VAMP2 (synaptobrevin-2), GDI1, NRDG1 and PCLO. Interacts with prenylated Rab proteins (including RAB5 and RAB6), and with the members of the Ras superfamily HRAS, RHOA, TC21, and RAP1A.

It localises to the cell membrane. The protein resides in the cytoplasm. Its subcellular location is the golgi apparatus. It is found in the cytoplasmic vesicle. The protein localises to the secretory vesicle. It localises to the synaptic vesicle. General Rab protein regulator required for vesicle formation from the Golgi complex. May control vesicle docking and fusion by mediating the action of Rab GTPases to the SNARE complexes. In addition it inhibits the removal of Rab GTPases from the membrane by GDI1. This chain is Prenylated Rab acceptor protein 1 (Rabac1), found in Mus musculus (Mouse).